The chain runs to 263 residues: Fructose-bisphosphate aldolase class 1 (263 aa).

Substrate is bound by residues Asp-24–His-25, His-29, Asp-33, and Trp-144. The active-site Proton donor is Tyr-146. Substrate-binding positions include Arg-148, Lys-177–Lys-179, Ser-202–Gly-204, and Gly-231–Arg-232. Residue Lys-177 is the Schiff-base intermediate with dihydroxyacetone-P of the active site.

The protein belongs to the DeoC/FbaB aldolase family. As to quaternary structure, homodecamer (dimer of pentamers).

The protein resides in the cytoplasm. The enzyme catalyses beta-D-fructose 1,6-bisphosphate = D-glyceraldehyde 3-phosphate + dihydroxyacetone phosphate. Its activity is regulated as follows. Activated by citrate. Catalyzes the reversible cleavage of fructose 1,6-bisphosphate (FBP) to glyceraldehyde 3-phosphate (GAP) and dihydroxyacetone phosphate (DHAP). The chain is Fructose-bisphosphate aldolase class 1 (fba) from Thermoproteus tenax (strain ATCC 35583 / DSM 2078 / JCM 9277 / NBRC 100435 / Kra 1).